Consider the following 225-residue polypeptide: Techylectin-like protein (225 aa).

A Fibrinogen C-terminal domain is found at 32-225 (CPSPPLPIDC…WTEIKIKDVK (194 aa)). A disulfide bridge connects residues cysteine 41 and cysteine 60. Positions 75 to 77 (RGD) match the Cell attachment site motif. Positions 164 and 170 each coordinate Ca(2+). Cysteine 172 and cysteine 185 form a disulfide bridge.

Expressed by the venom gland.

Its subcellular location is the secreted. Functionally, lectin involved in innate immunity. The chain is Techylectin-like protein from Phoneutria nigriventer (Brazilian armed spider).